A 346-amino-acid polypeptide reads, in one-letter code: Eukaryotic translation initiation factor 3 subunit I (346 aa).

5 WD repeats span residues 8-47 (GHER…RLGT), 50-89 (GHNG…IAHS), 150-189 (EGCA…CLEI), 192-233 (LHKQ…KTYE), and 289-328 (DHFG…FDFK).

It belongs to the eIF-3 subunit I family. Component of the eukaryotic translation initiation factor 3 (eIF-3) complex.

It localises to the cytoplasm. In terms of biological role, component of the eukaryotic translation initiation factor 3 (eIF-3) complex, which is involved in protein synthesis of a specialized repertoire of mRNAs and, together with other initiation factors, stimulates binding of mRNA and methionyl-tRNAi to the 40S ribosome. The eIF-3 complex specifically targets and initiates translation of a subset of mRNAs involved in cell proliferation. The sequence is that of Eukaryotic translation initiation factor 3 subunit I from Eremothecium gossypii (strain ATCC 10895 / CBS 109.51 / FGSC 9923 / NRRL Y-1056) (Yeast).